The sequence spans 739 residues: Interleukin-17 receptor D (739 aa).

A signal peptide spans 1–16 (MAPWLQLCSVFFTVNA). Residues 17–299 (CLNGSQLAVA…VHSPWAGPIR (283 aa)) lie on the Extracellular side of the membrane. Asparagine 19, asparagine 55, asparagine 62, asparagine 80, asparagine 137, asparagine 171, asparagine 206, and asparagine 277 each carry an N-linked (GlcNAc...) asparagine glycan. Residues 300-320 (AVAITVPLVVISAFATLFTVM) traverse the membrane as a helical segment. Residues 321 to 739 (CRKKQQENIY…TDELHAVAPL (419 aa)) are Cytoplasmic-facing. Residues 355 to 509 (RPKVFLCYSS…LMDNLPQLCS (155 aa)) enclose the SEFIR domain. 2 disordered regions span residues 614–635 (GPAD…EARP) and 650–719 (VKAG…SSGS). Residues 667–702 (SSVPSSELSLPLMEGLSTDQTETSSLTESVSSSSGL) show a composition bias toward low complexity.

As to quaternary structure, interacts with MAP3K7. Self-associates. Interacts with FGFR1, FGFR2 and phosphorylated MAP2K1 or MAP2K2. Associates with a MAP2K1/2-MAPK1/3 complex. In terms of tissue distribution, expressed in umbilical vein endothelial cells and in several highly vascularized tissues such as kidney, colon, skeletal muscle, heart and small intestine. Highly expressed in ductal epithelial cells of salivary glands, seminal vesicles and the collecting tubules of the kidney. Isoform 1 is also highly expressed in both fetal and adult brain, pituitary, tonsils, spleen, adenoids, fetal kidney, liver, testes and ovary. Isoform 1 is also expressed at moderate levels in primary aortic endothelial cells and adrenal medulla, and at low levels in adrenal cortex. Isoform 4 is specifically and highly expressed in pituitary, fetal brain and umbilical vein endothelial cells.

Its subcellular location is the golgi apparatus membrane. The protein resides in the cell membrane. It localises to the cytoplasm. Its function is as follows. Feedback inhibitor of fibroblast growth factor mediated Ras-MAPK signaling and ERK activation. Regulates the nuclear ERK signaling pathway by spatially blocking nuclear translocation of activated ERK without inhibiting cytoplasmic phosphorylation of ERK. Mediates JNK activation and may be involved in apoptosis. May inhibit FGF-induced FGFR1 tyrosine phosphorylation. Might have a role in the early stages of fate specification of GnRH-secreting neurons. Inhibits TGFB-induced epithelial-to-mesenchymal transition in lens epithelial cells. The polypeptide is Interleukin-17 receptor D (IL17RD) (Homo sapiens (Human)).